Consider the following 359-residue polypeptide: L-seryl-tRNA(Sec) kinase (359 aa).

Residue 25–32 (GLPAAGKS) coordinates ATP.

It belongs to the L-seryl-tRNA(Sec) kinase family. Mg(2+) serves as cofactor.

The enzyme catalyses L-seryl-tRNA(Sec) + ATP = O-phospho-L-seryl-tRNA(Sec) + ADP. It participates in aminoacyl-tRNA biosynthesis; selenocysteinyl-tRNA(Sec) biosynthesis; selenocysteinyl-tRNA(Sec) from L-seryl-tRNA(Sec) (archaeal/eukaryal route): step 1/2. Functionally, specifically phosphorylates seryl-tRNA(Sec) to O-phosphoseryl-tRNA(Sec), an activated intermediate for selenocysteine biosynthesis. No activity with other tRNAs has been detected. This is L-seryl-tRNA(Sec) kinase (Pstk) from Mus musculus (Mouse).